An 829-amino-acid polypeptide reads, in one-letter code: MKYDHQSIETRWQKKWEDSGIFQCDTEADKPKYYVLEMFPYPSGNIHMGHVRNYSIGDVVARFKRMQGFNVLHPMGWDAFGLPAENAAIKNGTHPAKWTFANIDNMRSQLKRLGYSYDWQREVATCTPEYYRWEQLFFLRFLEKGLVYRKKAAQNWCPKCHTVLANEQVIEGLCWRCDSAVEQKELTQWFLRITDYAEELLADLSKLENGWPERVLSMQRNWIGKSTGAEIRFALDGRDDSITVFTTRPDTIFGATFMSIAPEHPLVEELIDGKPQADDVRAFVERIRNMDRIDRQSDTLEKEGVFTGAYCVNPFTGRKMPIWVANFVLAEYGTGAVMAVPAHDQRDFEFARKYDLPMQVVIQPQGEALDPATMSAAWTEAGALVNSGAFDGLANEDAKQRIADDLETTGNGRRTINYRLRDWNISRQRYWGAPIPVIYCDACGVVPEKEENLPVVLPLDVKTHDDGRSPLPHTPAFYECTCPVCGGKARRETDTMDTFVESSWYFARYTDATNDKAPFTPDALRYWLPVDQYIGGVEHAILHLLYSRFFTKALRDCGFIELDEPFANLLTQGMVLMDGSKMSKSKGNVVDPTEMIARYGADTVRLFCLFAAPPERDFDWSESGIEGSYRFVGRVWRLVEELREHLLAVGACSSTAEDAKTPVARELRLKEHATVRKAGDDLNDRFQFNTAIAAVMELVNALYLAKDELVADESGRKVLSSAVSTVLTLLSPFTPHLSEELWALLGHTESVSTLPWPRWKEDALVRDTVTLVVQVNGKLRGKLDIPADASREEVETLALNEPNVLRYLEGVTVRKVVVIPGKLVNVVVS.

The 'HIGH' region motif lies at 40–50 (PYPSGNIHMGH). The 'KMSKS' region motif lies at 581-585 (KMSKS). Lysine 584 serves as a coordination point for ATP.

Belongs to the class-I aminoacyl-tRNA synthetase family.

The protein resides in the cytoplasm. It catalyses the reaction tRNA(Leu) + L-leucine + ATP = L-leucyl-tRNA(Leu) + AMP + diphosphate. The sequence is that of Leucine--tRNA ligase from Nitratidesulfovibrio vulgaris (strain ATCC 29579 / DSM 644 / CCUG 34227 / NCIMB 8303 / VKM B-1760 / Hildenborough) (Desulfovibrio vulgaris).